A 466-amino-acid polypeptide reads, in one-letter code: Argininosuccinate lyase (466 aa).

Belongs to the lyase 1 family. Argininosuccinate lyase subfamily.

The protein localises to the cytoplasm. The catalysed reaction is 2-(N(omega)-L-arginino)succinate = fumarate + L-arginine. The protein operates within amino-acid biosynthesis; L-arginine biosynthesis; L-arginine from L-ornithine and carbamoyl phosphate: step 3/3. In Syntrophobacter fumaroxidans (strain DSM 10017 / MPOB), this protein is Argininosuccinate lyase.